The primary structure comprises 909 residues: Protein translocase subunit SecA (909 aa).

Residues Q87, 105 to 109 (GEGKT), and D514 each bind ATP. The disordered stretch occupies residues 879 to 909 (TPVQGGPKVGRNDPCPCGSGKKYKHCHGKLS). Residues C893, C895, C904, and H905 each contribute to the Zn(2+) site. Positions 899 to 909 (KKYKHCHGKLS) are enriched in basic residues.

The protein belongs to the SecA family. In terms of assembly, monomer and homodimer. Part of the essential Sec protein translocation apparatus which comprises SecA, SecYEG and auxiliary proteins SecDF-YajC and YidC. Zn(2+) is required as a cofactor.

It localises to the cell inner membrane. The protein localises to the cytoplasm. It catalyses the reaction ATP + H2O + cellular proteinSide 1 = ADP + phosphate + cellular proteinSide 2.. Part of the Sec protein translocase complex. Interacts with the SecYEG preprotein conducting channel. Has a central role in coupling the hydrolysis of ATP to the transfer of proteins into and across the cell membrane, serving both as a receptor for the preprotein-SecB complex and as an ATP-driven molecular motor driving the stepwise translocation of polypeptide chains across the membrane. The sequence is that of Protein translocase subunit SecA from Azoarcus sp. (strain BH72).